The chain runs to 276 residues: MLDAEQKKNYVAGAFGEFVGTAYFLFMGVGGAVNFLNNAAGSPLPGFAIPFCFGFSLFVNVFIWAPISGGVFNPSITIALMATNPKDFPWYRGILYIVSQFLGALFGSWLIDLIQPEAPNAATLLADGVSVAQGLFMEMFATSVLTMAVLILAGERYGKYLAPFGIGMSLFISALCAGPYTGASLNPARTLGPAIVANQYGRAHWIYYVGPTLGSLLAAGYWHILRILNIDVVDLKNVLNKCKKCGKEDPRISLKHCEECLKDDPKPEKYDIESQN.

Residues 1–10 are Cytoplasmic-facing; sequence MLDAEQKKNY. The helical transmembrane segment at 11–31 threads the bilayer; the sequence is VAGAFGEFVGTAYFLFMGVGG. Residues 32-46 are Extracellular-facing; it reads AVNFLNNAAGSPLPG. The chain crosses the membrane as a helical span at residues 47-67; the sequence is FAIPFCFGFSLFVNVFIWAPI. Residues 68-93 are Cytoplasmic-facing; it reads SGGVFNPSITIALMATNPKDFPWYRG. The short motif at 73–75 is the NPA 1 element; it reads NPS. The helical transmembrane segment at 94–114 threads the bilayer; that stretch reads ILYIVSQFLGALFGSWLIDLI. The Extracellular segment spans residues 115-133; that stretch reads QPEAPNAATLLADGVSVAQ. A helical transmembrane segment spans residues 134–154; the sequence is GLFMEMFATSVLTMAVLILAG. The Cytoplasmic portion of the chain corresponds to 155–159; sequence ERYGK. Residues 160–180 traverse the membrane as a helical segment; the sequence is YLAPFGIGMSLFISALCAGPY. The Extracellular segment spans residues 181–204; that stretch reads TGASLNPARTLGPAIVANQYGRAH. The short motif at 186-188 is the NPA 2 element; the sequence is NPA. The chain crosses the membrane as a helical span at residues 205 to 225; it reads WIYYVGPTLGSLLAAGYWHIL. The Cytoplasmic segment spans residues 226–276; sequence RILNIDVVDLKNVLNKCKKCGKEDPRISLKHCEECLKDDPKPEKYDIESQN.

Belongs to the MIP/aquaporin (TC 1.A.8) family.

The protein localises to the cell membrane. It carries out the reaction H2O(in) = H2O(out). Its activity is regulated as follows. Polyethylene glycol (PEG) stimulates whereas glycerol inhibits the aquaporin activity. Functionally, water channel required to facilitate the transport of water across membranes. Stimulates plant drought tolerance by facilitating the transport of water from the arbuscular mycorrhiza fungus to host plants. The sequence is that of Aquaporin-1 from Rhizophagus irregularis (Arbuscular mycorrhizal fungus).